Consider the following 234-residue polypeptide: Ubiquinone biosynthesis O-methyltransferase (234 aa).

S-adenosyl-L-methionine is bound by residues Arg-36, Gly-56, Asp-77, and Met-125.

This sequence belongs to the methyltransferase superfamily. UbiG/COQ3 family.

The catalysed reaction is a 3-demethylubiquinol + S-adenosyl-L-methionine = a ubiquinol + S-adenosyl-L-homocysteine + H(+). The enzyme catalyses a 3-(all-trans-polyprenyl)benzene-1,2-diol + S-adenosyl-L-methionine = a 2-methoxy-6-(all-trans-polyprenyl)phenol + S-adenosyl-L-homocysteine + H(+). Its pathway is cofactor biosynthesis; ubiquinone biosynthesis. Its function is as follows. O-methyltransferase that catalyzes the 2 O-methylation steps in the ubiquinone biosynthetic pathway. The sequence is that of Ubiquinone biosynthesis O-methyltransferase from Actinobacillus pleuropneumoniae serotype 5b (strain L20).